The sequence spans 108 residues: UPF0060 membrane protein BH2744 (108 aa).

4 helical membrane-spanning segments follow: residues 6-26 (TLFLLAGLAEIGGGYLIWLWL), 31-51 (PVYLGLFGAVALALYGVIATF), 60-80 (VYAAYGGVFIFLAVLWGWWID), and 86-106 (TYDWIGAVICLVGVGIMLWAP).

The protein belongs to the UPF0060 family.

The protein localises to the cell membrane. This Halalkalibacterium halodurans (strain ATCC BAA-125 / DSM 18197 / FERM 7344 / JCM 9153 / C-125) (Bacillus halodurans) protein is UPF0060 membrane protein BH2744.